The chain runs to 122 residues: Large ribosomal subunit protein bL12 (122 aa).

Belongs to the bacterial ribosomal protein bL12 family. As to quaternary structure, homodimer. Part of the ribosomal stalk of the 50S ribosomal subunit. Forms a multimeric L10(L12)X complex, where L10 forms an elongated spine to which 2 to 4 L12 dimers bind in a sequential fashion. Binds GTP-bound translation factors.

Forms part of the ribosomal stalk which helps the ribosome interact with GTP-bound translation factors. Is thus essential for accurate translation. In Shewanella putrefaciens (strain CN-32 / ATCC BAA-453), this protein is Large ribosomal subunit protein bL12.